We begin with the raw amino-acid sequence, 1380 residues long: DNA-directed RNA polymerase subunit beta (1380 aa).

It belongs to the RNA polymerase beta chain family. The RNAP catalytic core consists of 2 alpha, 1 beta, 1 beta' and 1 omega subunit. When a sigma factor is associated with the core the holoenzyme is formed, which can initiate transcription.

The catalysed reaction is RNA(n) + a ribonucleoside 5'-triphosphate = RNA(n+1) + diphosphate. In terms of biological role, DNA-dependent RNA polymerase catalyzes the transcription of DNA into RNA using the four ribonucleoside triphosphates as substrates. The polypeptide is DNA-directed RNA polymerase subunit beta (Nitrobacter hamburgensis (strain DSM 10229 / NCIMB 13809 / X14)).